The sequence spans 156 residues: ATP synthase subunit b (156 aa).

Residues 7–26 traverse the membrane as a helical segment; it reads ILGQAIAFVLFVWFCMKYVW.

The protein belongs to the ATPase B chain family. As to quaternary structure, F-type ATPases have 2 components, F(1) - the catalytic core - and F(0) - the membrane proton channel. F(1) has five subunits: alpha(3), beta(3), gamma(1), delta(1), epsilon(1). F(0) has three main subunits: a(1), b(2) and c(10-14). The alpha and beta chains form an alternating ring which encloses part of the gamma chain. F(1) is attached to F(0) by a central stalk formed by the gamma and epsilon chains, while a peripheral stalk is formed by the delta and b chains.

The protein resides in the cell inner membrane. In terms of biological role, f(1)F(0) ATP synthase produces ATP from ADP in the presence of a proton or sodium gradient. F-type ATPases consist of two structural domains, F(1) containing the extramembraneous catalytic core and F(0) containing the membrane proton channel, linked together by a central stalk and a peripheral stalk. During catalysis, ATP synthesis in the catalytic domain of F(1) is coupled via a rotary mechanism of the central stalk subunits to proton translocation. Component of the F(0) channel, it forms part of the peripheral stalk, linking F(1) to F(0). The chain is ATP synthase subunit b from Pectobacterium atrosepticum (strain SCRI 1043 / ATCC BAA-672) (Erwinia carotovora subsp. atroseptica).